A 293-amino-acid polypeptide reads, in one-letter code: Ribosomal protein L11 methyltransferase (293 aa).

Residues T145, G166, D188, and N230 each coordinate S-adenosyl-L-methionine.

The protein belongs to the methyltransferase superfamily. PrmA family.

The protein resides in the cytoplasm. The enzyme catalyses L-lysyl-[protein] + 3 S-adenosyl-L-methionine = N(6),N(6),N(6)-trimethyl-L-lysyl-[protein] + 3 S-adenosyl-L-homocysteine + 3 H(+). In terms of biological role, methylates ribosomal protein L11. This Salmonella newport (strain SL254) protein is Ribosomal protein L11 methyltransferase.